A 133-amino-acid chain; its full sequence is Small ribosomal subunit protein bS16 (133 aa).

Residues Lys-83–Glu-101 show a composition bias toward basic and acidic residues. Residues Lys-83–Arg-102 are disordered.

This sequence belongs to the bacterial ribosomal protein bS16 family.

The chain is Small ribosomal subunit protein bS16 from Mesorhizobium japonicum (strain LMG 29417 / CECT 9101 / MAFF 303099) (Mesorhizobium loti (strain MAFF 303099)).